The chain runs to 251 residues: NADPH-dependent oxidoreductase (251 aa).

This sequence belongs to the flavin oxidoreductase frp family. FMN is required as a cofactor.

In terms of biological role, reduces FMN, organic nitro compounds and disulfide DTNB. Involved in maintenance of the cellular redox state and the disulfide stress response. The chain is NADPH-dependent oxidoreductase (nfrA) from Staphylococcus epidermidis (strain ATCC 12228 / FDA PCI 1200).